The following is a 90-amino-acid chain: Small ribosomal subunit protein uS15 (90 aa).

This sequence belongs to the universal ribosomal protein uS15 family. Part of the 30S ribosomal subunit. Forms a bridge to the 50S subunit in the 70S ribosome, contacting the 23S rRNA.

Its function is as follows. One of the primary rRNA binding proteins, it binds directly to 16S rRNA where it helps nucleate assembly of the platform of the 30S subunit by binding and bridging several RNA helices of the 16S rRNA. Functionally, forms an intersubunit bridge (bridge B4) with the 23S rRNA of the 50S subunit in the ribosome. The chain is Small ribosomal subunit protein uS15 from Wolinella succinogenes (strain ATCC 29543 / DSM 1740 / CCUG 13145 / JCM 31913 / LMG 7466 / NCTC 11488 / FDC 602W) (Vibrio succinogenes).